The primary structure comprises 288 residues: ATP synthase gamma chain 1 (288 aa).

This sequence belongs to the ATPase gamma chain family. In terms of assembly, F-type ATPases have 2 components, CF(1) - the catalytic core - and CF(0) - the membrane proton channel. CF(1) has five subunits: alpha(3), beta(3), gamma(1), delta(1), epsilon(1). CF(0) has three main subunits: a, b and c.

It is found in the cell inner membrane. Its function is as follows. Produces ATP from ADP in the presence of a proton gradient across the membrane. The gamma chain is believed to be important in regulating ATPase activity and the flow of protons through the CF(0) complex. The protein is ATP synthase gamma chain 1 of Photobacterium profundum (strain SS9).